A 179-amino-acid polypeptide reads, in one-letter code: Tetratricopeptide repeat protein 36 (179 aa).

3 TPR repeats span residues 43-76, 77-110, and 115-148; these read SSQL…CPLN, PSAY…AGPK, and CQAY…GSSF.

It belongs to the TTC36 family.

In Caenorhabditis briggsae, this protein is Tetratricopeptide repeat protein 36.